The primary structure comprises 434 residues: Peptidase B (434 aa).

Mn(2+) is bound by residues lysine 198 and aspartate 203. Residue lysine 210 is part of the active site. The Mn(2+) site is built by aspartate 221, aspartate 280, and glutamate 282. Residue arginine 284 is part of the active site.

Belongs to the peptidase M17 family. Homohexamer. The cofactor is Mn(2+).

The protein localises to the cytoplasm. The enzyme catalyses Release of an N-terminal amino acid, Xaa, from a peptide or arylamide. Xaa is preferably Glu or Asp but may be other amino acids, including Leu, Met, His, Cys and Gln.. Its function is as follows. Probably plays an important role in intracellular peptide degradation. The protein is Peptidase B of Pasteurella multocida (strain Pm70).